We begin with the raw amino-acid sequence, 736 residues long: Phosphoribosylformylglycinamidine synthase subunit PurL (736 aa).

H49 is a catalytic residue. ATP-binding residues include Y52 and K91. E93 is a Mg(2+) binding site. Substrate contacts are provided by residues 94-97 (SHNH) and R116. The active-site Proton acceptor is H95. D117 lines the Mg(2+) pocket. Position 240 (Q240) interacts with substrate. D268 provides a ligand contact to Mg(2+). Position 312 to 314 (312 to 314 (ESQ)) interacts with substrate. Positions 493 and 530 each coordinate ATP. N531 is a binding site for Mg(2+). S533 contacts substrate.

This sequence belongs to the FGAMS family. As to quaternary structure, monomer. Part of the FGAM synthase complex composed of 1 PurL, 1 PurQ and 2 PurS subunits.

It is found in the cytoplasm. It carries out the reaction N(2)-formyl-N(1)-(5-phospho-beta-D-ribosyl)glycinamide + L-glutamine + ATP + H2O = 2-formamido-N(1)-(5-O-phospho-beta-D-ribosyl)acetamidine + L-glutamate + ADP + phosphate + H(+). The protein operates within purine metabolism; IMP biosynthesis via de novo pathway; 5-amino-1-(5-phospho-D-ribosyl)imidazole from N(2)-formyl-N(1)-(5-phospho-D-ribosyl)glycinamide: step 1/2. In terms of biological role, part of the phosphoribosylformylglycinamidine synthase complex involved in the purines biosynthetic pathway. Catalyzes the ATP-dependent conversion of formylglycinamide ribonucleotide (FGAR) and glutamine to yield formylglycinamidine ribonucleotide (FGAM) and glutamate. The FGAM synthase complex is composed of three subunits. PurQ produces an ammonia molecule by converting glutamine to glutamate. PurL transfers the ammonia molecule to FGAR to form FGAM in an ATP-dependent manner. PurS interacts with PurQ and PurL and is thought to assist in the transfer of the ammonia molecule from PurQ to PurL. This Rhodopseudomonas palustris (strain BisB18) protein is Phosphoribosylformylglycinamidine synthase subunit PurL.